The sequence spans 466 residues: UDP-N-acetylglucosamine--dolichyl-phosphate N-acetylglucosaminephosphotransferase (466 aa).

A helical membrane pass occupies residues 12–32 (AAFAVAAHAPVLGLILLGSIV). Position 57 (Asp57) interacts with UDP-N-acetyl-alpha-D-glucosamine. N-linked (GlcNAc...) asparagine glycosylation is present at Asn59. Glu90 lines the UDP-N-acetyl-alpha-D-glucosamine pocket. Helical transmembrane passes span 91-111 (SLGI…TVCL) and 124-144 (PYAS…LGFV). Residue Lys155 participates in dolichyl phosphate binding. Helical transmembrane passes span 156-176 (IILT…SLSV) and 236-256 (GAAL…LCIF). 255-263 (IFCTNSINI) provides a ligand contact to dolichyl phosphate. Asn262 is a Mg(2+) binding site. 4 consecutive transmembrane segments (helical) span residues 263–283 (ILAG…VASV), 316–336 (DHQL…LALW), 345–365 (VFVG…SSIT), and 374–394 (LFFA…FSIV). Asn268 contributes to the UDP-N-acetyl-alpha-D-glucosamine binding site. Asp349 lines the Mg(2+) pocket. UDP-N-acetyl-alpha-D-glucosamine is bound at residue 398 to 400 (RHR). Asn416 carries N-linked (GlcNAc...) asparagine glycosylation. Residues 442-462 (CQVIACVLGFVVRYVLSAFLY) traverse the membrane as a helical segment.

This sequence belongs to the glycosyltransferase 4 family. Requires Mg(2+) as cofactor.

The protein localises to the endoplasmic reticulum membrane. It catalyses the reaction a di-trans,poly-cis-dolichyl phosphate + UDP-N-acetyl-alpha-D-glucosamine = an N-acetyl-alpha-D-glucosaminyl-diphospho-di-trans,poly-cis-dolichol + UMP. It functions in the pathway protein modification; protein glycosylation. Its activity is regulated as follows. Inhibited by natural nucleoside antibiotic tunicamycin, which acts as a structural analog and competitor of UDP-GlcNAc. Its function is as follows. UDP-N-acetylglucosamine--dolichyl-phosphate N-acetylglucosaminephosphotransferase that operates in the biosynthetic pathway of dolichol-linked oligosaccharides, the glycan precursors employed in protein asparagine (N)-glycosylation. The assembly of dolichol-linked oligosaccharides begins on the cytosolic side of the endoplasmic reticulum membrane and finishes in its lumen. The sequential addition of sugars to dolichol pyrophosphate produces dolichol-linked oligosaccharides containing fourteen sugars, including two GlcNAcs, nine mannoses and three glucoses. Once assembled, the oligosaccharide is transferred from the lipid to nascent proteins by oligosaccharyltransferases. Catalyzes the initial step of dolichol-linked oligosaccharide biosynthesis, transfering GlcNAc-1-P from cytosolic UDP-GlcNAc onto the carrier lipid dolichyl phosphate (P-dolichol), yielding GlcNAc-P-P-dolichol embedded in the cytoplasmic leaflet of the endoplasmic reticulum membrane. This chain is UDP-N-acetylglucosamine--dolichyl-phosphate N-acetylglucosaminephosphotransferase (NAGT), found in Leishmania amazonensis.